A 510-amino-acid chain; its full sequence is NEDD8-activating enzyme E1 regulatory subunit (510 aa).

A2 carries the post-translational modification N-acetylalanine. An N6-acetyllysine mark is found at K6 and K317. The interaction with UBA3 stretch occupies residues 307-320 (DMIADSGKYIKLQN).

The protein belongs to the ubiquitin-activating E1 family. ULA1 subfamily. As to quaternary structure, heterodimer of UBA3 and NAE1. The complex binds NEDD8 and UBE2M. Binds APP and TP53BP2. Post-translationally, ubiquitinated by TRIP12, leading to its degradation by the proteasome.

The protein resides in the cell membrane. It participates in protein modification; protein neddylation. With respect to regulation, binding of TP53BP2 to the regulatory subunit NAE1 decreases neddylation activity. Its function is as follows. Regulatory subunit of the dimeric UBA3-NAE1 E1 enzyme. E1 activates NEDD8 by first adenylating its C-terminal glycine residue with ATP, thereafter linking this residue to the side chain of the catalytic cysteine, yielding a NEDD8-UBA3 thioester and free AMP. E1 finally transfers NEDD8 to the catalytic cysteine of UBE2M. Necessary for cell cycle progression through the S-M checkpoint. Overexpression of NAE1 causes apoptosis through deregulation of NEDD8 conjugation. The covalent attachment of NEDD8 to target proteins is known as 'neddylation' and the process is involved in the regulation of cell growth, viability and development. The sequence is that of NEDD8-activating enzyme E1 regulatory subunit (NAE1) from Macaca fascicularis (Crab-eating macaque).